The primary structure comprises 92 residues: Small ribosomal subunit protein uS19c (92 aa).

This sequence belongs to the universal ribosomal protein uS19 family.

It is found in the plastid. The protein localises to the chloroplast. Protein S19 forms a complex with S13 that binds strongly to the 16S ribosomal RNA. The sequence is that of Small ribosomal subunit protein uS19c from Phaseolus angularis (Azuki bean).